The chain runs to 447 residues: uncharacterized protein (447 aa).

This is an uncharacterized protein from Mus musculus (Mouse).